Here is a 152-residue protein sequence, read N- to C-terminus: Transcriptional regulator MraZ (152 aa).

SpoVT-AbrB domains lie at 5 to 52 (ATLV…PLPE) and 81 to 124 (ASEC…DETT).

It belongs to the MraZ family. As to quaternary structure, forms oligomers.

Its subcellular location is the cytoplasm. The protein resides in the nucleoid. Functionally, negatively regulates its own expression and that of the subsequent genes in the proximal part of the division and cell wall (dcw) gene cluster. Acts by binding directly to DNA. May also regulate the expression of genes outside the dcw cluster. The protein is Transcriptional regulator MraZ of Escherichia coli O45:K1 (strain S88 / ExPEC).